Here is a 204-residue protein sequence, read N- to C-terminus: Small ribosomal subunit protein uS4 (204 aa).

The S4 RNA-binding domain occupies 92–156; it reads RRLDALVLRS…SKVPFQVARE (65 aa).

It belongs to the universal ribosomal protein uS4 family. Part of the 30S ribosomal subunit. Contacts protein S5. The interaction surface between S4 and S5 is involved in control of translational fidelity.

Its function is as follows. One of the primary rRNA binding proteins, it binds directly to 16S rRNA where it nucleates assembly of the body of the 30S subunit. With S5 and S12 plays an important role in translational accuracy. This is Small ribosomal subunit protein uS4 from Streptomyces griseus subsp. griseus (strain JCM 4626 / CBS 651.72 / NBRC 13350 / KCC S-0626 / ISP 5235).